The sequence spans 264 residues: 3-methyl-2-oxobutanoate hydroxymethyltransferase (264 aa).

Asp-45 and Asp-84 together coordinate Mg(2+). Residues 45–46, Asp-84, and Lys-112 contribute to the 3-methyl-2-oxobutanoate site; that span reads DS. Mg(2+) is bound at residue Glu-114. Glu-181 (proton acceptor) is an active-site residue.

It belongs to the PanB family. As to quaternary structure, homodecamer; pentamer of dimers. It depends on Mg(2+) as a cofactor.

Its subcellular location is the cytoplasm. The enzyme catalyses 3-methyl-2-oxobutanoate + (6R)-5,10-methylene-5,6,7,8-tetrahydrofolate + H2O = 2-dehydropantoate + (6S)-5,6,7,8-tetrahydrofolate. It functions in the pathway cofactor biosynthesis; (R)-pantothenate biosynthesis; (R)-pantoate from 3-methyl-2-oxobutanoate: step 1/2. Functionally, catalyzes the reversible reaction in which hydroxymethyl group from 5,10-methylenetetrahydrofolate is transferred onto alpha-ketoisovalerate to form ketopantoate. The polypeptide is 3-methyl-2-oxobutanoate hydroxymethyltransferase (Shewanella frigidimarina (strain NCIMB 400)).